A 229-amino-acid chain; its full sequence is Orotidine 5'-phosphate decarboxylase (229 aa).

Substrate is bound by residues aspartate 10, lysine 32, 59–68 (DLKFHDIPNT), threonine 119, arginine 180, glutamine 189, glycine 209, and arginine 210. Lysine 61 acts as the Proton donor in catalysis.

Belongs to the OMP decarboxylase family. Type 1 subfamily. As to quaternary structure, homodimer.

It carries out the reaction orotidine 5'-phosphate + H(+) = UMP + CO2. It participates in pyrimidine metabolism; UMP biosynthesis via de novo pathway; UMP from orotate: step 2/2. In terms of biological role, catalyzes the decarboxylation of orotidine 5'-monophosphate (OMP) to uridine 5'-monophosphate (UMP). The polypeptide is Orotidine 5'-phosphate decarboxylase (Legionella pneumophila (strain Corby)).